The primary structure comprises 34 residues: Crassicorin-II (34 aa).

A disulfide bond links cysteine 6 and cysteine 30.

Highly expressed by the mesenteries. Moderately expressed by the pharynx. Weakly expressed by the gonad and pedal disk. No expression in tentacle.

Its subcellular location is the secreted. It is found in the nematocyst. Its function is as follows. Peptide with both antimicrobial and neurotoxin activities. Cationic AMP with antimicrobial activity against both Gram-positive bacteria (B.subtilis) and Gram-negative bacteria (E.coli and S.enterica). Shows no significant antimicrobial activity against bacteria S.aureus and P.aeruginosa, as well as the fungus C.albicans. In vivo, induces reversible paralytic activity towards the shrimp P.paucidens. May act by impairing sodium or potassium channels in the prey. This Urticina crassicornis (Mottled anemone) protein is Crassicorin-II.